The following is a 356-amino-acid chain: Histidinol-phosphate aminotransferase (356 aa).

The residue at position 214 (K214) is an N6-(pyridoxal phosphate)lysine.

Belongs to the class-II pyridoxal-phosphate-dependent aminotransferase family. Histidinol-phosphate aminotransferase subfamily. Homodimer. Pyridoxal 5'-phosphate serves as cofactor.

It catalyses the reaction L-histidinol phosphate + 2-oxoglutarate = 3-(imidazol-4-yl)-2-oxopropyl phosphate + L-glutamate. It participates in amino-acid biosynthesis; L-histidine biosynthesis; L-histidine from 5-phospho-alpha-D-ribose 1-diphosphate: step 7/9. This chain is Histidinol-phosphate aminotransferase, found in Escherichia coli (strain SMS-3-5 / SECEC).